A 601-amino-acid polypeptide reads, in one-letter code: Leucine zipper putative tumor suppressor 1 (601 aa).

G2 carries the N-myristoyl glycine lipid modification. The disordered stretch occupies residues 135–190 (GAILHSSPESTNHQLHPMPPDKPKEQELKPGLCSGALSDSGRNSMSSLPTHSTTSS). Over residues 153-162 (PPDKPKEQEL) the composition is skewed to basic and acidic residues. The segment covering 174-190 (SGRNSMSSLPTHSTTSS) has biased composition (polar residues). Residues 255 to 573 (PLSTDECTIQ…RLEKALQQLA (319 aa)) adopt a coiled-coil conformation.

It belongs to the LZTS family. In terms of assembly, binds EEF1G, TLK2 and CDK1. Phosphorylated on serine residues. Hyperphosphorylated by the cAMP-dependent kinase PKA during cell-cycle progression. As to expression, highly expressed in brain, in particular in cortex, the CA2 region of the hippocampus, olfactory bulb, striatum and pons. Not detectable in the other tissues tested.

The protein localises to the cytoplasm. It is found in the cell membrane. Its subcellular location is the cell projection. The protein resides in the dendritic spine. It localises to the postsynaptic density. The protein localises to the synapse. In terms of biological role, involved in the regulation of cell growth. May stabilize the active CDC2-cyclin B1 complex and thereby contribute to the regulation of the cell cycle and the prevention of uncontrolled cell proliferation. May act as tumor suppressor. This is Leucine zipper putative tumor suppressor 1 (Lzts1) from Rattus norvegicus (Rat).